Here is a 369-residue protein sequence, read N- to C-terminus: Biotin synthase (369 aa).

Residues 51–269 (NYVQVSTLLS…IAVARIMMPK (219 aa)) form the Radical SAM core domain. [4Fe-4S] cluster is bound by residues Cys66, Cys70, and Cys73. 4 residues coordinate [2Fe-2S] cluster: Cys110, Cys141, Cys201, and Arg273.

It belongs to the radical SAM superfamily. Biotin synthase family. Homodimer. [4Fe-4S] cluster is required as a cofactor. [2Fe-2S] cluster serves as cofactor.

The catalysed reaction is (4R,5S)-dethiobiotin + (sulfur carrier)-SH + 2 reduced [2Fe-2S]-[ferredoxin] + 2 S-adenosyl-L-methionine = (sulfur carrier)-H + biotin + 2 5'-deoxyadenosine + 2 L-methionine + 2 oxidized [2Fe-2S]-[ferredoxin]. It participates in cofactor biosynthesis; biotin biosynthesis; biotin from 7,8-diaminononanoate: step 2/2. Its function is as follows. Catalyzes the conversion of dethiobiotin (DTB) to biotin by the insertion of a sulfur atom into dethiobiotin via a radical-based mechanism. This is Biotin synthase from Pseudoalteromonas atlantica (strain T6c / ATCC BAA-1087).